Here is a 374-residue protein sequence, read N- to C-terminus: UDP-N-acetylglucosamine--N-acetylmuramyl-(pentapeptide) pyrophosphoryl-undecaprenol N-acetylglucosamine transferase (374 aa).

UDP-N-acetyl-alpha-D-glucosamine contacts are provided by residues 13 to 15 (TGG), Asn124, Arg165, Ser193, and Gln294.

This sequence belongs to the glycosyltransferase 28 family. MurG subfamily.

It is found in the cell inner membrane. It catalyses the reaction di-trans,octa-cis-undecaprenyl diphospho-N-acetyl-alpha-D-muramoyl-L-alanyl-D-glutamyl-meso-2,6-diaminopimeloyl-D-alanyl-D-alanine + UDP-N-acetyl-alpha-D-glucosamine = di-trans,octa-cis-undecaprenyl diphospho-[N-acetyl-alpha-D-glucosaminyl-(1-&gt;4)]-N-acetyl-alpha-D-muramoyl-L-alanyl-D-glutamyl-meso-2,6-diaminopimeloyl-D-alanyl-D-alanine + UDP + H(+). It participates in cell wall biogenesis; peptidoglycan biosynthesis. Its function is as follows. Cell wall formation. Catalyzes the transfer of a GlcNAc subunit on undecaprenyl-pyrophosphoryl-MurNAc-pentapeptide (lipid intermediate I) to form undecaprenyl-pyrophosphoryl-MurNAc-(pentapeptide)GlcNAc (lipid intermediate II). In Sinorhizobium medicae (strain WSM419) (Ensifer medicae), this protein is UDP-N-acetylglucosamine--N-acetylmuramyl-(pentapeptide) pyrophosphoryl-undecaprenol N-acetylglucosamine transferase.